The sequence spans 462 residues: 3-isopropylmalate dehydratase large subunit (462 aa).

Residues C337, C397, and C400 each coordinate [4Fe-4S] cluster.

The protein belongs to the aconitase/IPM isomerase family. LeuC type 1 subfamily. In terms of assembly, heterodimer of LeuC and LeuD. Requires [4Fe-4S] cluster as cofactor.

The enzyme catalyses (2R,3S)-3-isopropylmalate = (2S)-2-isopropylmalate. It participates in amino-acid biosynthesis; L-leucine biosynthesis; L-leucine from 3-methyl-2-oxobutanoate: step 2/4. Functionally, catalyzes the isomerization between 2-isopropylmalate and 3-isopropylmalate, via the formation of 2-isopropylmaleate. The polypeptide is 3-isopropylmalate dehydratase large subunit (Listeria monocytogenes serotype 4a (strain HCC23)).